Consider the following 325-residue polypeptide: Fatty acid synthase alpha subunit hexA (325 aa).

A Mg(2+)-binding site is contributed by aspartate 209. Acetyl-CoA-binding positions include 209-211 (DLV), 255-265 (EAVFKCLHTQT), 279-282 (KSDN), and 301-303 (ISH). Residue serine 302 coordinates Mg(2+).

Belongs to the thiolase-like superfamily. Fungal fatty acid synthetase subunit alpha family. As to quaternary structure, [Alpha(6)beta(6)] hexamers of two multifunctional subunits (alpha and beta). Post-translationally, 4'-phosphopantetheine is transferred from CoA to a specific serine of the acyl carrier domain by the C-terminal PPT domain. This modification is essential for activity because fatty acids are bound in thioester linkage to the sulfhydryl of the prosthetic group.

The catalysed reaction is acetyl-CoA + n malonyl-CoA + 2n NADPH + 4n H(+) = a long-chain-acyl-CoA + n CoA + n CO2 + 2n NADP(+).. It catalyses the reaction a fatty acyl-[ACP] + malonyl-[ACP] + H(+) = a 3-oxoacyl-[ACP] + holo-[ACP] + CO2. It carries out the reaction a (3R)-hydroxyacyl-[ACP] + NADP(+) = a 3-oxoacyl-[ACP] + NADPH + H(+). The protein operates within mycotoxin biosynthesis. Fatty acid synthase alpha subunit; part of the fragmented gene cluster that mediates the biosynthesis of dothistromin (DOTH), a polyketide toxin very similar in structure to the aflatoxin precursor, versicolorin B. The first step of the pathway is the conversion of acetate to norsolorinic acid (NOR) and requires the fatty acid synthase subunits hexA and hexB, as well as the polyketide synthase pksA. PksA combines a hexanoyl starter unit and 7 malonyl-CoA extender units to synthesize the precursor NOR. The hexanoyl starter unit is provided to the acyl-carrier protein (ACP) domain by the fungal fatty acid synthase hexA/hexB. The second step is the conversion of NOR to averantin (AVN) and requires the norsolorinic acid ketoreductase nor1, which catalyzes the dehydration of norsolorinic acid to form (1'S)-averantin. The cytochrome P450 monooxygenase avnA then catalyzes the hydroxylation of AVN to 5'hydroxyaverantin (HAVN). The next step is performed by adhA that transforms HAVN to averufin (AVF). Averufin might then be converted to hydroxyversicolorone by cypX and avfA. Hydroxyversicolorone is further converted versiconal hemiacetal acetate (VHA) by moxY. VHA is then the substrate for the versiconal hemiacetal acetate esterase est1 to yield versiconal (VAL). Versicolorin B synthase vbsA then converts VAL to versicolorin B (VERB) by closing the bisfuran ring. Then, the activity of the versicolorin B desaturase verB leads to versicolorin A (VERA). DotB, a predicted chloroperoxidase, may perform epoxidation of the A-ring of VERA. Alternatively, a cytochrome P450, such as cypX or avnA could catalyze this step. It is also possible that another, uncharacterized, cytochrome P450 enzyme is responsible for this step. Opening of the epoxide could potentially be achieved by the epoxide hydrolase epoA. However, epoA seems not to be required for DOTH biosynthesis, but other epoxide hydrolases may have the ability to complement this hydrolysis. Alternatively, opening of the epoxide ring could be achieved non-enzymatically. The next step is the deoxygenation of ring A to yield the 5,8-dihydroxyanthraquinone which is most likely catalyzed by the NADPH dehydrogenase encoded by ver1. The last stages of DOTH biosynthesis are proposed to involve hydroxylation of the bisfuran. OrdB and norB might have oxidative roles here. An alternative possibility is that cytochrome P450 monoogenases such as avnA and cypX might perform these steps in addition to previously proposed steps. The sequence is that of Fatty acid synthase alpha subunit hexA from Dothistroma septosporum (Red band needle blight fungus).